The chain runs to 227 residues: NADH-quinone oxidoreductase subunit C (227 aa).

Belongs to the complex I 30 kDa subunit family. NDH-1 is composed of 14 different subunits. Subunits NuoB, C, D, E, F, and G constitute the peripheral sector of the complex.

It is found in the cell inner membrane. The enzyme catalyses a quinone + NADH + 5 H(+)(in) = a quinol + NAD(+) + 4 H(+)(out). In terms of biological role, NDH-1 shuttles electrons from NADH, via FMN and iron-sulfur (Fe-S) centers, to quinones in the respiratory chain. The immediate electron acceptor for the enzyme in this species is believed to be ubiquinone. Couples the redox reaction to proton translocation (for every two electrons transferred, four hydrogen ions are translocated across the cytoplasmic membrane), and thus conserves the redox energy in a proton gradient. This Legionella pneumophila (strain Corby) protein is NADH-quinone oxidoreductase subunit C.